Here is a 104-residue protein sequence, read N- to C-terminus: Large ribosomal subunit protein uL23 (104 aa).

Belongs to the universal ribosomal protein uL23 family. Part of the 50S ribosomal subunit. Contacts protein L29, and trigger factor when it is bound to the ribosome.

In terms of biological role, one of the early assembly proteins it binds 23S rRNA. One of the proteins that surrounds the polypeptide exit tunnel on the outside of the ribosome. Forms the main docking site for trigger factor binding to the ribosome. This is Large ribosomal subunit protein uL23 from Ralstonia pickettii (strain 12J).